A 302-amino-acid polypeptide reads, in one-letter code: Ribonuclease HII (302 aa).

The RNase H type-2 domain occupies 53–297 (EFEIGVDEVG…VQQAIEGTLA (245 aa)). Residues D59, E60, and D163 each contribute to the a divalent metal cation site.

The protein belongs to the RNase HII family. Requires Mn(2+) as cofactor. Mg(2+) is required as a cofactor.

It is found in the cytoplasm. The enzyme catalyses Endonucleolytic cleavage to 5'-phosphomonoester.. Functionally, endonuclease that specifically degrades the RNA of RNA-DNA hybrids. This is Ribonuclease HII from Psychrobacter sp. (strain PRwf-1).